The chain runs to 179 residues: Transcription factor 21 (179 aa).

Residues 19 to 88 are disordered; that stretch reads DCDSLKVDSN…VQRNAANARE (70 aa). Polar residues-rich tracts occupy residues 30-49 and 70-80; these read EFGT…NGSP and SGVSQEGKQVQ. Residues 79–131 enclose the bHLH domain; sequence VQRNAANARERARMRVLSKAFSRLKTTLPWVPPDTKLSKLDTLRLASSYIAHL.

In terms of assembly, efficient DNA binding requires dimerization with another bHLH protein. Forms a heterodimer with TCF3 and binds the E box (5'-CANNTG-3'). Expressed at high levels in lung, kidney, gut, heart, ovary and podocytes (visceral glomerular epithelial cells). Also found in spleen, large intestine, uterus, bladder and testis.

The protein localises to the nucleus. Functionally, involved in epithelial-mesenchymal interactions in kidney and lung morphogenesis that include epithelial differentiation and branching morphogenesis. May be involved in the organogenesis of the spleen and heart and in cardiac and coronary artery development. May function in the development and sex differentiation of gonad via transcriptional regulation of AD4BP/SF-1. This is Transcription factor 21 (Tcf21) from Mus musculus (Mouse).